The following is a 477-amino-acid chain: Aspartyl/glutamyl-tRNA(Asn/Gln) amidotransferase subunit B (477 aa).

Belongs to the GatB/GatE family. GatB subfamily. As to quaternary structure, heterotrimer of A, B and C subunits.

The catalysed reaction is L-glutamyl-tRNA(Gln) + L-glutamine + ATP + H2O = L-glutaminyl-tRNA(Gln) + L-glutamate + ADP + phosphate + H(+). The enzyme catalyses L-aspartyl-tRNA(Asn) + L-glutamine + ATP + H2O = L-asparaginyl-tRNA(Asn) + L-glutamate + ADP + phosphate + 2 H(+). Its function is as follows. Allows the formation of correctly charged Asn-tRNA(Asn) or Gln-tRNA(Gln) through the transamidation of misacylated Asp-tRNA(Asn) or Glu-tRNA(Gln) in organisms which lack either or both of asparaginyl-tRNA or glutaminyl-tRNA synthetases. The reaction takes place in the presence of glutamine and ATP through an activated phospho-Asp-tRNA(Asn) or phospho-Glu-tRNA(Gln). This Clostridium tetani (strain Massachusetts / E88) protein is Aspartyl/glutamyl-tRNA(Asn/Gln) amidotransferase subunit B.